A 949-amino-acid chain; its full sequence is MAQQYLPGQRWISDSEAELGLGTILTQDGRMLTVLYPATGETRQYATRSAPLTRVRFVPGDEITHFEGWKMTVREVDDVDGLLVYHGLTAQNEARTLPETQLSNFIQFRLASDRLFAGQIDPLAWFSLRYHTLQHQSAQLQSSLWGLGGVRAQPIAHQLHIAKEVADRIAPRVLLADEVGLGKTIEAGLIIHRQLLSGRASRVLILVPENLQHQWLVEMRRRFNLEVALFDAERFIESDASNPFEDTQLALVSLEWLKEDERAQDAAFAAGWDLLVVDEAHHLVWHPESASAEYRLVEQLAEVIPGVLLLTATPEQLGLDSHFARLRLLDPNRFHDLDAFRAESSSYQPVAEAVQELLDEGRLSQQAHQTIHDFLGAEGEALLAAATDGDIEASSRLIRELLDRHGTGRLLFRNTRAAVQGFPERQLHPYPLPCPAEYMELPLGEHAELYPEVAFQSQQEPADEQNRWWQFDPRVEWLIDTLKMLKKYKVLVICAHAETALDLEDALRVRSGIPATVFHEGMSILERDRAAAYFADEEFGAQVLICSEIGSEGRNFQFSHHLVLFDLPAHPDLLEQRIGRLDRIGQQHTIQLHVPYLETSPQERLFKWYHEALNAFLATCPTGNALQHQFGPRLLPLLEDGDDDTFQGLIDEARAERERLEAELHAGRDRLLELNSGGGEQGTALVDAIEEQDDQFALPIYMEQLFDAFGIDSEDHSENALVLRPSEKMLDASFPLGDDEAVTITYDREQALAREDMQFLTWEHPMVQGGMDLVLSGSMGNTAVALIKNKALKPGTVLLELLFVSEVVAPRALQLSRFLPPLALRCLLDGNGNDLAAKVAFDTLNDQLESVPRASANKFVQAQRDVLATQIAAAEAKIKPRHVERVAEAQRKLKAGLDEELARLVALQAVNPSVRDSEIEALRQQREDGLAALEKAALRLEAIRVLVAG.

In terms of domain architecture, Helicase ATP-binding spans 164–332 (EVADRIAPRV…FARLRLLDPN (169 aa)). 177–184 (DEVGLGKT) contributes to the ATP binding site. Positions 278–281 (DEAH) match the DEAH box motif. Residues 474–628 (RVEWLIDTLK…TCPTGNALQH (155 aa)) enclose the Helicase C-terminal domain.

The protein belongs to the SNF2/RAD54 helicase family. RapA subfamily. In terms of assembly, interacts with the RNAP. Has a higher affinity for the core RNAP than for the holoenzyme. Its ATPase activity is stimulated by binding to RNAP.

Transcription regulator that activates transcription by stimulating RNA polymerase (RNAP) recycling in case of stress conditions such as supercoiled DNA or high salt concentrations. Probably acts by releasing the RNAP, when it is trapped or immobilized on tightly supercoiled DNA. Does not activate transcription on linear DNA. Probably not involved in DNA repair. This is RNA polymerase-associated protein RapA from Stutzerimonas stutzeri (strain A1501) (Pseudomonas stutzeri).